Reading from the N-terminus, the 150-residue chain is 3-hydroxyacyl-[acyl-carrier-protein] dehydratase FabZ (150 aa).

Histidine 54 is an active-site residue.

The protein belongs to the thioester dehydratase family. FabZ subfamily.

It is found in the cytoplasm. The catalysed reaction is a (3R)-hydroxyacyl-[ACP] = a (2E)-enoyl-[ACP] + H2O. Functionally, involved in unsaturated fatty acids biosynthesis. Catalyzes the dehydration of short chain beta-hydroxyacyl-ACPs and long chain saturated and unsaturated beta-hydroxyacyl-ACPs. The protein is 3-hydroxyacyl-[acyl-carrier-protein] dehydratase FabZ of Chromobacterium violaceum (strain ATCC 12472 / DSM 30191 / JCM 1249 / CCUG 213 / NBRC 12614 / NCIMB 9131 / NCTC 9757 / MK).